Consider the following 219-residue polypeptide: Transmembrane protein 179B (219 aa).

Transmembrane regions (helical) follow at residues 9-29, 65-85, 96-116, and 167-187; these read VELALFAAAFLCGAVAAAAMT, FVAGASGLLALYCLLLLLFWI, GAIGLRIALAISAIAVFLVLV, and TSSWVNLVLWCVVLVLQVVQW. Positions 198–219 are disordered; that stretch reads ERGDPEWSSETDALVGSRLSHS. Residues S206 and S214 each carry the phosphoserine modification.

The protein belongs to the TMEM179 family.

It is found in the membrane. The chain is Transmembrane protein 179B (TMEM179B) from Homo sapiens (Human).